Reading from the N-terminus, the 87-residue chain is uncharacterized protein (87 aa).

Transmembrane regions (helical) follow at residues 8 to 28 (IVVLIGTQLAASAVILFIFDL) and 47 to 67 (LAGSFAFYLFSAGLFFLLIGL).

The protein resides in the cell membrane. This is an uncharacterized protein from Bacillus subtilis (strain 168).